The following is a 158-amino-acid chain: MNKPKNSPVRKIIAENRKARFNFEILDTLEAGLVLTGTEVKSLRANQSNIAESYASFENGEFWLINSYIPEYTQGNRFNHEPRRLRKLLISKREMSRLFNSVSRDGMTVVPLKLYFNDRGRAKLELALARGKKTHDKRETEKKRDWNREKARLMRDKG.

The segment at 132 to 158 (KKTHDKRETEKKRDWNREKARLMRDKG) is disordered. The span at 136-158 (DKRETEKKRDWNREKARLMRDKG) shows a compositional bias: basic and acidic residues.

It belongs to the SmpB family.

It is found in the cytoplasm. Functionally, required for rescue of stalled ribosomes mediated by trans-translation. Binds to transfer-messenger RNA (tmRNA), required for stable association of tmRNA with ribosomes. tmRNA and SmpB together mimic tRNA shape, replacing the anticodon stem-loop with SmpB. tmRNA is encoded by the ssrA gene; the 2 termini fold to resemble tRNA(Ala) and it encodes a 'tag peptide', a short internal open reading frame. During trans-translation Ala-aminoacylated tmRNA acts like a tRNA, entering the A-site of stalled ribosomes, displacing the stalled mRNA. The ribosome then switches to translate the ORF on the tmRNA; the nascent peptide is terminated with the 'tag peptide' encoded by the tmRNA and targeted for degradation. The ribosome is freed to recommence translation, which seems to be the essential function of trans-translation. In Brucella anthropi (strain ATCC 49188 / DSM 6882 / CCUG 24695 / JCM 21032 / LMG 3331 / NBRC 15819 / NCTC 12168 / Alc 37) (Ochrobactrum anthropi), this protein is SsrA-binding protein.